The following is a 414-amino-acid chain: Probable solanesyl-diphosphate synthase 3, chloroplastic (414 aa).

Positions 1-23 are enriched in low complexity; it reads MAAPSSLASSSHLSRRATAAASP. Residues 1–36 are disordered; it reads MAAPSSLASSSHLSRRATAAASPSIPPPSPPPPPQR. Residues 1-72 constitute a chloroplast transit peptide; sequence MAAPSSLASS…KPGVAAVDVP (72 aa). The span at 24–35 shows a compositional bias: pro residues; the sequence is SIPPPSPPPPPQ. 3 residues coordinate isopentenyl diphosphate: K134, R137, and H172. Residues D179 and D183 each contribute to the Mg(2+) site. R188 is a binding site for an all-trans-polyprenyl diphosphate. Residue R189 coordinates isopentenyl diphosphate. K265, T266, Q303, and K320 together coordinate an all-trans-polyprenyl diphosphate.

It belongs to the FPP/GGPP synthase family. Homodimer. Mg(2+) is required as a cofactor.

The protein resides in the plastid. Its subcellular location is the chloroplast. The catalysed reaction is 7 isopentenyl diphosphate + (2E)-geranyl diphosphate = all-trans-nonaprenyl diphosphate + 7 diphosphate. Functionally, involved in providing solanesyl diphosphate for plastoquinone-9 (PQ-9) formation. The polypeptide is Probable solanesyl-diphosphate synthase 3, chloroplastic (Oryza sativa subsp. japonica (Rice)).